The sequence spans 355 residues: Anthranilate phosphoribosyltransferase (355 aa).

5-phospho-alpha-D-ribose 1-diphosphate-binding positions include Gly-99, 102 to 103, Thr-107, 109 to 112, 127 to 135, and Ser-139; these read GD, NIST, and KHGNRSVSS. Anthranilate is bound at residue Gly-99. Ser-111 lines the Mg(2+) pocket. Asn-130 contacts anthranilate. Arg-185 provides a ligand contact to anthranilate. Mg(2+)-binding residues include Asp-243 and Glu-244.

This sequence belongs to the anthranilate phosphoribosyltransferase family. In terms of assembly, homodimer. Mg(2+) serves as cofactor.

It catalyses the reaction N-(5-phospho-beta-D-ribosyl)anthranilate + diphosphate = 5-phospho-alpha-D-ribose 1-diphosphate + anthranilate. It functions in the pathway amino-acid biosynthesis; L-tryptophan biosynthesis; L-tryptophan from chorismate: step 2/5. Its function is as follows. Catalyzes the transfer of the phosphoribosyl group of 5-phosphorylribose-1-pyrophosphate (PRPP) to anthranilate to yield N-(5'-phosphoribosyl)-anthranilate (PRA). This Pseudoalteromonas translucida (strain TAC 125) protein is Anthranilate phosphoribosyltransferase.